We begin with the raw amino-acid sequence, 336 residues long: tRNA(Ile)-lysidine synthase (336 aa).

21–26 contributes to the ATP binding site; the sequence is SGGLDS.

This sequence belongs to the tRNA(Ile)-lysidine synthase family.

It is found in the cytoplasm. It catalyses the reaction cytidine(34) in tRNA(Ile2) + L-lysine + ATP = lysidine(34) in tRNA(Ile2) + AMP + diphosphate + H(+). Its function is as follows. Ligates lysine onto the cytidine present at position 34 of the AUA codon-specific tRNA(Ile) that contains the anticodon CAU, in an ATP-dependent manner. Cytidine is converted to lysidine, thus changing the amino acid specificity of the tRNA from methionine to isoleucine. This is tRNA(Ile)-lysidine synthase from Helicobacter pylori (strain ATCC 700392 / 26695) (Campylobacter pylori).